Here is an 80-residue protein sequence, read N- to C-terminus: uncharacterized protein (80 aa).

Residues 57–80 (GNIDSDVSDQDQIGNPSAPISNQI) form a disordered region.

This is an uncharacterized protein from Bacillus subtilis (strain 168).